Consider the following 242-residue polypeptide: MVPLSFPFHVAELEVGQHLYWQIGNLNLHGQVFISSWVVISALLVLVITGTRKMERDPQGVQNLLEFLWDYLRDLAREQIGEKAYRDWLPFIGTLFLFIFGCNWGGALVPWKLIELPNGELGAPTADINTTVAMALLVSLSYFYAGLSRKGLRYFEYYVEPTPIMLPFKIIEDFTKPLSLSFRLFGNILADELVVGVLAFLVPILVPLPAMFLGLFTSAIQALIFATLAANYIGEAVHEEHH.

The next 5 membrane-spanning stretches (helical) occupy residues 28–48 (LHGQ…VLVI), 89–109 (LPFI…GALV), 128–148 (INTT…AGLS), 193–213 (LVVG…AMFL), and 214–234 (GLFT…NYIG).

The protein belongs to the ATPase A chain family. As to quaternary structure, F-type ATPases have 2 components, CF(1) - the catalytic core - and CF(0) - the membrane proton channel. CF(1) has five subunits: alpha(3), beta(3), gamma(1), delta(1), epsilon(1). CF(0) has four main subunits: a, b, b' and c.

The protein resides in the plastid. It is found in the organellar chromatophore thylakoid membrane. Key component of the proton channel; it plays a direct role in the translocation of protons across the membrane. This Paulinella chromatophora protein is ATP synthase subunit a, organellar chromatophore.